The following is a 278-amino-acid chain: MALKTFKPVTPSLRQLVLVDRRELYKGKPVKALTEGKSSSGGRNNLGRITVRFRGGGHKRVLRNVDFKRRENLNVPATVERIEYDPNRTAFIALITFPDGKQSYILAPQRLSPGDKVIAGESVDVKPGNAAPIGSMPVGTIVHNVELKIGKGGAIARSAGNYAQIVGRDQGYVTLRLNSGEQRLVHGQCFATVGAVSNPDHMNISLGKAGRNRWLGKRPHVRGVAMNPVDHPHGGGEGRTSGGRNPVTPWGVPTKGKKTRSNKRTDTFILSSRHNRKK.

The interval 224–278 is disordered; that stretch reads VAMNPVDHPHGGGEGRTSGGRNPVTPWGVPTKGKKTRSNKRTDTFILSSRHNRKK.

It belongs to the universal ribosomal protein uL2 family. In terms of assembly, part of the 50S ribosomal subunit. Forms a bridge to the 30S subunit in the 70S ribosome.

Functionally, one of the primary rRNA binding proteins. Required for association of the 30S and 50S subunits to form the 70S ribosome, for tRNA binding and peptide bond formation. It has been suggested to have peptidyltransferase activity; this is somewhat controversial. Makes several contacts with the 16S rRNA in the 70S ribosome. This is Large ribosomal subunit protein uL2 from Methylorubrum extorquens (strain CM4 / NCIMB 13688) (Methylobacterium extorquens).